Reading from the N-terminus, the 315-residue chain is Transcription repressor OFP7 (315 aa).

Positions Tyr113–Arg183 are disordered. Residues Arg130 to Gly145 show a composition bias toward basic residues. The segment covering Leu160 to Glu174 has biased composition (polar residues). Residues Val230–Ala289 form the OVATE domain.

As to expression, expressed in roots, shoots, stems, flower buds and siliques.

It is found in the nucleus. Functionally, transcriptional repressor that regulates multiple aspects of plant growth and development through the regulation of BEL1-LIKE (BLH) and KNOX TALE (KNAT) homeodomain transcription factors. The polypeptide is Transcription repressor OFP7 (OFP7) (Arabidopsis thaliana (Mouse-ear cress)).